Here is an 834-residue protein sequence, read N- to C-terminus: Taste receptor type 1 member 2 (834 aa).

Positions methionine 1–alanine 19 are cleaved as a signal peptide. Topologically, residues glutamate 20–threonine 561 are extracellular. N-linked (GlcNAc...) asparagine glycosylation is found at asparagine 84, asparagine 292, asparagine 312, asparagine 363, asparagine 423, asparagine 482, and asparagine 522. The helical transmembrane segment at isoleucine 562–phenylalanine 582 threads the bilayer. The Cytoplasmic portion of the chain corresponds to tryptophan 583–proline 597. A helical transmembrane segment spans residues methionine 598–glycine 618. Over leucine 619 to alanine 630 the chain is Extracellular. A helical transmembrane segment spans residues leucine 631–valine 651. The Cytoplasmic portion of the chain corresponds to cysteine 652–serine 676. A helical transmembrane segment spans residues valine 677–leucine 697. At asparagine 698–serine 722 the chain is on the extracellular side. Residues leucine 723–methionine 743 traverse the membrane as a helical segment. The Cytoplasmic segment spans residues glycine 744–lysine 755. Residues phenylalanine 756 to serine 776 form a helical membrane-spanning segment. Over valine 777 to aspartate 779 the chain is Extracellular. A helical transmembrane segment spans residues glycine 780 to leucine 800. Residues glycine 801–aspartate 834 lie on the Cytoplasmic side of the membrane.

Belongs to the G-protein coupled receptor 3 family. TAS1R subfamily. Forms heterodimers with TAS1R3.

The protein resides in the cell membrane. In terms of biological role, putative taste receptor. TAS1R2/TAS1R3 recognizes diverse natural and synthetic sweeteners. The polypeptide is Taste receptor type 1 member 2 (TAS1R2) (Saimiri sciureus (Common squirrel monkey)).